The chain runs to 914 residues: TRPM8 channel-associated factor 3 (914 aa).

A Peptidase M60 domain is found at 533–832; it reads NSWVSTGLYL…TYLQLQEGFG (300 aa).

It belongs to the TCAF family.

Functionally, may play a role in the regulation of the cation channel TRPM8 activity. In Rattus norvegicus (Rat), this protein is TRPM8 channel-associated factor 3.